The chain runs to 150 residues: Avidin-related protein 7 (150 aa).

An N-terminal signal peptide occupies residues 1–24 (MVHATSPLLLLLLLSLALVAPGLS). Residues 26-147 (RKCSLTGEWD…GYNNFTRQRT (122 aa)) enclose the Avidin-like domain. Residues Cys-28 and Cys-105 are joined by a disulfide bond. Biotin-binding residues include Asn-36 and Ser-40. 2 N-linked (GlcNAc...) asparagine glycosylation sites follow: Asn-41 and Asn-54. Residues Tyr-57, Thr-59, and Asp-63 each contribute to the biotin site. An N-linked (GlcNAc...) asparagine glycan is attached at Asn-93. The biotin site is built by Ser-95, Ser-99, and Asn-140. Asn-141 carries N-linked (GlcNAc...) asparagine glycosylation.

It belongs to the avidin/streptavidin family. Homotetramer. Glycosylated.

Its subcellular location is the secreted. Functionally, forms a strong non-covalent specific complex with biotin. The protein is Avidin-related protein 7 (AVR7) of Gallus gallus (Chicken).